A 692-amino-acid chain; its full sequence is Elongation factor G (692 aa).

The 275-residue stretch at 8 to 282 (ENTRNIGIMA…GVVDYLPSPV (275 aa)) folds into the tr-type G domain. Residues 17–24 (AHIDAGKT), 81–85 (DTPGH), and 135–138 (NKMD) each bind GTP.

Belongs to the TRAFAC class translation factor GTPase superfamily. Classic translation factor GTPase family. EF-G/EF-2 subfamily.

It is found in the cytoplasm. In terms of biological role, catalyzes the GTP-dependent ribosomal translocation step during translation elongation. During this step, the ribosome changes from the pre-translocational (PRE) to the post-translocational (POST) state as the newly formed A-site-bound peptidyl-tRNA and P-site-bound deacylated tRNA move to the P and E sites, respectively. Catalyzes the coordinated movement of the two tRNA molecules, the mRNA and conformational changes in the ribosome. The protein is Elongation factor G of Anoxybacillus flavithermus (strain DSM 21510 / WK1).